Consider the following 787-residue polypeptide: Dolichyl-diphosphooligosaccharide--protein glycosyltransferase subunit STT3A (787 aa).

At methionine 1–asparagine 18 the chain is on the cytoplasmic side. Residues alanine 19 to isoleucine 39 traverse the membrane as a helical segment. Residues arginine 40–threonine 125 lie on the Lumenal side of the membrane. Residues glutamate 53–aspartate 55 carry the DXD motif 1 motif. Aspartate 55 contributes to the Mn(2+) binding site. Residues alanine 126 to alanine 144 traverse the membrane as a helical segment. The Cytoplasmic segment spans residues lysine 145 to glycine 146. The helical transmembrane segment at threonine 147–isoleucine 164 threads the bilayer. Over serine 165 to glutamate 175 the chain is Lumenal. Residues aspartate 173 and glutamate 175 each coordinate Mn(2+). Positions aspartate 173–glutamate 175 match the DXD motif 2 motif. The chain crosses the membrane as a helical span at residues alanine 176–threonine 195. Over glycine 196 to serine 197 the chain is Cytoplasmic. The helical transmembrane segment at leucine 198–valine 212 threads the bilayer. Residues cysteine 213–glycine 217 are Lumenal-facing. A helical transmembrane segment spans residues tyrosine 218–valine 234. Residues threonine 235 to serine 239 are Cytoplasmic-facing. A helical transmembrane segment spans residues serine 240–phenylalanine 265. Residues asparagine 266–histidine 273 lie on the Lumenal side of the membrane. The chain crosses the membrane as a helical span at residues phenylalanine 274–lysine 293. Residues glycine 294 to threonine 306 are Cytoplasmic-facing. Residues leucine 307–valine 327 traverse the membrane as a helical segment. The Lumenal portion of the chain corresponds to alanine 328–threonine 365. The short motif at serine 357–glutamate 360 is the SVSE motif element. A helical membrane pass occupies residues tryptophan 366–phenylalanine 388. At leucine 389–alanine 394 the chain is on the cytoplasmic side. A helical transmembrane segment spans residues serine 395–valine 411. Over methionine 412–leucine 415 the chain is Lumenal. Arginine 414 contributes to the dolichyl diphosphooligosaccharide binding site. A helical membrane pass occupies residues methionine 416–valine 437. Topologically, residues leucine 438–serine 525 are cytoplasmic. Residues serine 453–alanine 475 show a composition bias toward low complexity. The tract at residues serine 453–valine 507 is disordered. Over residues asparagine 477–alanine 504 the composition is skewed to basic and acidic residues. The helical transmembrane segment at valine 526–alanine 546 threads the bilayer. The Lumenal segment spans residues alanine 547–glutamine 787. The interval tryptophan 592–aspartate 594 is interacts with target acceptor peptide in protein substrate. Residues tryptophan 592–glycine 596 carry the WWDYG motif motif. Tyrosine 597 is a binding site for dolichyl diphosphooligosaccharide. 2 N-linked (GlcNAc...) asparagine glycosylation sites follow: asparagine 604 and asparagine 611. Residue asparagine 615 is glycosylated (N-linked (GlcNAc...) (high mannose) asparagine). A DK motif motif is present at residues aspartate 659–methionine 666. Over residues arginine 759 to serine 769 the composition is skewed to basic residues. The interval arginine 759–glutamine 787 is disordered.

It belongs to the STT3 family. Component of the oligosaccharyltransferase (OST) complex. Requires Mg(2+) as cofactor. Mn(2+) serves as cofactor.

The protein localises to the endoplasmic reticulum membrane. The enzyme catalyses a di-trans,poly-cis-dolichyl diphosphooligosaccharide + L-asparaginyl-[protein] = N(4)-(oligosaccharide-(1-&gt;4)-N-acetyl-beta-D-glucosaminyl-(1-&gt;4)-N-acetyl-beta-D-glucosaminyl)-L-asparaginyl-[protein] + a di-trans,poly-cis-dolichyl diphosphate + H(+). It participates in protein modification; protein glycosylation. In terms of biological role, catalytic subunit of the oligosaccharyl transferase (OST) complex that catalyzes the initial transfer of a defined glycan (Glc(3)Man(9)GlcNAc(2) in eukaryotes) from the lipid carrier dolichol-pyrophosphate to an asparagine residue within an Asn-X-Ser/Thr consensus motif in nascent polypeptide chains, the first step in protein N-glycosylation. N-glycosylation occurs cotranslationally and the complex associates with the Sec61 complex at the channel-forming translocon complex that mediates protein translocation across the endoplasmic reticulum (ER). All subunits are required for a maximal enzyme activity. This subunit contains the active site and the acceptor peptide and donor lipid-linked oligosaccharide (LLO) binding pockets. This Oryza sativa subsp. japonica (Rice) protein is Dolichyl-diphosphooligosaccharide--protein glycosyltransferase subunit STT3A (STT3A).